The sequence spans 158 residues: Transcription factor BTF3 homolog 4 (158 aa).

At lysine 5 the chain carries N6-methyllysine. The NAC-A/B domain maps to 33–98 (TADDKKLQSS…AEAKPITEML (66 aa)). Phosphothreonine is present on threonine 111. A disordered region spans residues 123–158 (QVLDSKTPKPEDIDEEEDDVPDLVENFDEASKNEAN). A compositionally biased stretch (acidic residues) spans 134 to 150 (DIDEEEDDVPDLVENFD).

Belongs to the NAC-beta family.

This chain is Transcription factor BTF3 homolog 4 (BTF3L4), found in Bos taurus (Bovine).